The chain runs to 135 residues: Ribosome-binding factor A (135 aa).

Belongs to the RbfA family. Monomer. Binds 30S ribosomal subunits, but not 50S ribosomal subunits or 70S ribosomes.

The protein localises to the cytoplasm. Functionally, one of several proteins that assist in the late maturation steps of the functional core of the 30S ribosomal subunit. Associates with free 30S ribosomal subunits (but not with 30S subunits that are part of 70S ribosomes or polysomes). Required for efficient processing of 16S rRNA. May interact with the 5'-terminal helix region of 16S rRNA. The protein is Ribosome-binding factor A of Caldicellulosiruptor saccharolyticus (strain ATCC 43494 / DSM 8903 / Tp8T 6331).